The following is a 341-amino-acid chain: S-adenosylmethionine:tRNA ribosyltransferase-isomerase (341 aa).

It belongs to the QueA family. In terms of assembly, monomer.

The protein resides in the cytoplasm. The catalysed reaction is 7-aminomethyl-7-carbaguanosine(34) in tRNA + S-adenosyl-L-methionine = epoxyqueuosine(34) in tRNA + adenine + L-methionine + 2 H(+). It functions in the pathway tRNA modification; tRNA-queuosine biosynthesis. Its function is as follows. Transfers and isomerizes the ribose moiety from AdoMet to the 7-aminomethyl group of 7-deazaguanine (preQ1-tRNA) to give epoxyqueuosine (oQ-tRNA). This Clostridium botulinum (strain Okra / Type B1) protein is S-adenosylmethionine:tRNA ribosyltransferase-isomerase.